The primary structure comprises 561 residues: Long-chain-fatty-acid--CoA ligase (561 aa).

ATP is bound at residue 213-224 (YTGGTTGVAKGA).

The protein belongs to the ATP-dependent AMP-binding enzyme family. The cofactor is Mg(2+).

It is found in the membrane. The catalysed reaction is a long-chain fatty acid + ATP + CoA = a long-chain fatty acyl-CoA + AMP + diphosphate. It functions in the pathway lipid metabolism; fatty acid beta-oxidation. In terms of biological role, catalyzes the esterification, concomitant with transport, of exogenous long-chain fatty acids into metabolically active CoA thioesters for subsequent degradation or incorporation into phospholipids. The polypeptide is Long-chain-fatty-acid--CoA ligase (fadD) (Escherichia coli O157:H7).